A 275-amino-acid chain; its full sequence is Large ribosomal subunit protein uL2c (275 aa).

Positions 219–267 (TVRGSVMNPCDHPHGGGEGRTPIGRTRPLTPWGKPALGKKTRKTKKLSS) are disordered. Basic residues predominate over residues 255 to 264 (LGKKTRKTKK).

This sequence belongs to the universal ribosomal protein uL2 family. As to quaternary structure, part of the 50S ribosomal subunit.

It is found in the plastid. The protein resides in the chloroplast. The chain is Large ribosomal subunit protein uL2c (rpl2) from Thalassiosira pseudonana (Marine diatom).